The following is a 563-amino-acid chain: Serine carboxypeptidase S10 family member 2 (563 aa).

Residues 1–23 form the signal peptide; it reads MNIKIILLSIILIIQLLLLNNNG. Residues 24 to 529 lie on the Extracellular side of the membrane; sequence GIVESKINFS…VPLTLGAWIG (506 aa). Asparagine 31, asparagine 95, asparagine 110, and asparagine 213 each carry an N-linked (GlcNAc...) asparagine glycan. The active site involves serine 225. N-linked (GlcNAc...) asparagine glycosylation is found at asparagine 244, asparagine 328, and asparagine 382. Aspartate 417 is a catalytic residue. N-linked (GlcNAc...) asparagine glycosylation occurs at asparagine 468. Histidine 479 is an active-site residue. The N-linked (GlcNAc...) asparagine glycan is linked to asparagine 499. Residues 530–550 form a helical membrane-spanning segment; the sequence is ITVGGCAFGFLVGGLIIYIIM. Residues 551 to 563 lie on the Cytoplasmic side of the membrane; sequence KKSSKNGYYKVIQ.

Belongs to the peptidase S10 family.

Its subcellular location is the membrane. Probable carboxypeptidase. The sequence is that of Serine carboxypeptidase S10 family member 2 from Dictyostelium discoideum (Social amoeba).